We begin with the raw amino-acid sequence, 386 residues long: Histidine decarboxylase (386 aa).

Histidine 120 lines the substrate pocket. N6-(pyridoxal phosphate)lysine is present on lysine 233.

Belongs to the group II decarboxylase family. As to quaternary structure, homotetramer. Pyridoxal 5'-phosphate is required as a cofactor.

It catalyses the reaction L-histidine + H(+) = histamine + CO2. Its pathway is siderophore biosynthesis; anguibactin biosynthesis. The chain is Histidine decarboxylase from Vibrio anguillarum (strain ATCC 68554 / 775) (Listonella anguillarum).